We begin with the raw amino-acid sequence, 144 residues long: HMG1/2-like protein (144 aa).

Disordered stretches follow at residues 1-42 (MKGG…PPSA) and 85-144 (PFIS…EDDD). 2 stretches are compositionally biased toward basic and acidic residues: residues 8-35 (AKSD…DPNK) and 89-99 (KAEKRKQEYEK). Positions 36 to 105 (PKRPPSAFFV…EYEKNLQAYN (70 aa)) form a DNA-binding region, HMG box. Positions 126-144 (NDDDEDQDGSGEDDSEDDD) are enriched in acidic residues.

It belongs to the HMGB family. As to expression, expressed at higher levels in dark-grown tissues, such as roots; and at lower levels in light-grown tissues, such as cotyledons and stems.

It is found in the nucleus. The protein is HMG1/2-like protein of Ipomoea nil (Japanese morning glory).